We begin with the raw amino-acid sequence, 537 residues long: CTP synthase (537 aa).

Residues 1-268 form an amidoligase domain region; it reads MPAKFIFVTG…DSIVVERLKL (268 aa). Ser-14 provides a ligand contact to CTP. Ser-14 is a UTP binding site. Residue 15–20 coordinates ATP; the sequence is SLGKGI. L-glutamine is bound at residue Tyr-55. Position 72 (Asp-72) interacts with ATP. 2 residues coordinate Mg(2+): Asp-72 and Glu-142. CTP contacts are provided by residues 149–151, 189–194, and Lys-225; these read DIE and KTKPTQ. UTP contacts are provided by residues 189–194 and Lys-225; that span reads KTKPTQ. A Glutamine amidotransferase type-1 domain is found at 293 to 534; it reads EIALVGKYVT…IGAACRRAGG (242 aa). Residue Gly-354 coordinates L-glutamine. Catalysis depends on Cys-381, which acts as the Nucleophile; for glutamine hydrolysis. Residues 382–385, Glu-405, and Arg-462 contribute to the L-glutamine site; that span reads LGMQ. Catalysis depends on residues His-507 and Glu-509.

The protein belongs to the CTP synthase family. As to quaternary structure, homotetramer.

The enzyme catalyses UTP + L-glutamine + ATP + H2O = CTP + L-glutamate + ADP + phosphate + 2 H(+). It catalyses the reaction L-glutamine + H2O = L-glutamate + NH4(+). It carries out the reaction UTP + NH4(+) + ATP = CTP + ADP + phosphate + 2 H(+). It participates in pyrimidine metabolism; CTP biosynthesis via de novo pathway; CTP from UDP: step 2/2. Allosterically activated by GTP, when glutamine is the substrate; GTP has no effect on the reaction when ammonia is the substrate. The allosteric effector GTP functions by stabilizing the protein conformation that binds the tetrahedral intermediate(s) formed during glutamine hydrolysis. Inhibited by the product CTP, via allosteric rather than competitive inhibition. Catalyzes the ATP-dependent amination of UTP to CTP with either L-glutamine or ammonia as the source of nitrogen. Regulates intracellular CTP levels through interactions with the four ribonucleotide triphosphates. The protein is CTP synthase of Moorella thermoacetica (strain ATCC 39073 / JCM 9320).